We begin with the raw amino-acid sequence, 249 residues long: Segregation and condensation protein A (249 aa).

Belongs to the ScpA family. In terms of assembly, component of a cohesin-like complex composed of ScpA, ScpB and the Smc homodimer, in which ScpA and ScpB bind to the head domain of Smc. The presence of the three proteins is required for the association of the complex with DNA.

The protein localises to the cytoplasm. Participates in chromosomal partition during cell division. May act via the formation of a condensin-like complex containing Smc and ScpB that pull DNA away from mid-cell into both cell halves. The protein is Segregation and condensation protein A of Listeria innocua serovar 6a (strain ATCC BAA-680 / CLIP 11262).